A 1936-amino-acid polypeptide reads, in one-letter code: MEEKKKKKQEEKKKKEGAQKKAADQKTKVPEPTKTCSSQPQPAGTSTSTSTSTISSSNNGKRASASGQQPAASRYLPREVPPRFRQQEQKQLLKRGQPLPTGTLTSVSPTQGAGPAGVSPPPLPGAGTQHHPSKLQPDLSHSGLADHYENSHWGQQPTYRSEANCSWDKVIIDRTDKEAWPSITGTETESASECTTDTDSASNCGSENSSMATGSAQGNFTGHTKKTNGNNGTNGALVQSPSNQSALGAGGANSNGSAARVWGVATGSSSGLAHCSVSGGDGKMDTMIGDGRSQNCWGASNSNAGINLNLNPNANPAAWPVLGHEGTVATGNPSSICSPVSAIGQNMGNQNGNPTGTLGAWGNLLPQESTEPQTSTSQNVSFSAQPQNLNTDGPNNTNPMNSSPNPINAMQTNGLPNWGMAVGMGAIIPPHLQGLPGANGSSVSQVSGGSAEGISNSVWGLSPGNPATGNSNSGFSQGNGDTVNSALSAKQNGSSSAVQKEGSGGNAWDSGPPAGPGILAWGRGSGNNGVGNIHSGAWGHPSRSTSNGVNGEWGKPPNQHSNSDINGKGSTGWESPSVTSQNPTVQPGGEHMNSWAKAASSGTTASEGSSDGSGNHNEGSTGREGTGEGRRRDKGIIDQGHIQLPRNDLDPRVLSNTGWGQTPVKQNTAWEFEESPRSERKNDNGTEAWGCAATQASNSGGKNDGSIMNSTNTSSVSGWVNAPPAAVPANTGWGDSNNKAPSGPGVWGDSISSTAVSTAAAAKSGHAWSGAANQEDKSPTWGEPPKPKSQHWGDGQRSNPAWSAGGGDWADSSSVLGHLGDGKKNGSGWDADSNRSGSGWNDTTRSGNSGWGNSTNTKANPGTNWGETLKPGPQQNWASKPQDNNVSNWGGAASVKQTGTGWIGGPVPVKQKDSSEATGWEEPSPPSIRRKMEIDDGTSAWGDPSNYNNKTVNMWDRNNPVIQSSTTTNTTTTTTTTTSNTTHRVETPPPHQAGTQLNRSPLLGPVSSGWGEMPNVHSKTENSWGEPSSPSTLVDNGTAAWGKPPSSGSGWGDHPAEPPVAFGRAGAPVAASALCKPASKSMQEGWGSGGDEMNLSTSQWEDEEGDVWNNAASQESTSSCSSWGNAPKKGLQKGMKTSGKQDEAWIMSRLIKQLTDMGFPREPAEEALKSNNMNLDQAMSALLEKKVDVDKRGLGVTDHNGMAAKPLGCRPPISKESSVDRPTFLDKDGGLVEEPTPSPFLPSPSLKLPLSHSALPSQALGGIASGLGMQNLNSSRQIPSGNLGMFGNSGAAQARTMQQPPQPPVQPLNSSQPSLRAQVPQFLSPQVQAQLLQFAAKNIGLNPALLTSPINPQHMTMLNQLYQLQLAYQRLQIQQQMLQAQRNVSGSMRQQEQQVARTITNLQQQIQQHQRQLAQALLVKQPPPPPPPPHLSLHPSAGKSAMDSFPSHPQTPGLPDLQTKEQQSSPNTFAPYPLAGLNPNMNVNSMDMTGGLSVKDPSQSQSRLPQWTHPNSMDNLPSAASPLEQNPSKHGAIPGGLSIGPPGKSSIDDSYGRYDLIQNSESPASPPVAVPHSWSRAKSDSDKISNGSSINWPPEFHPGVPWKGLQNIDPENDPDVTPGSVPTGPTINTTIQDVNRYLLKSGGSSPPSSQNATLPSSSAWPLSASGYSSSFSSIASAPSVAGKLSDIKSTWSSGPTSHTQASLSHELWKVPRNSTAPTRPPPGLTNPKPSSTWGASPLGWTSSYSSGSAWSTDTSGRTSSWLVLRNLTPQIDGSTLRTLCLQHGPLITFHLNLTQGNAVVRYSSKEEAAKAQKSLHMCVLGNTTILAEFAGEEEVNRFLAQGQALPPTSSWQSSSASSQPRLSAAGSSHGLVRSDAGHWNAPCLGGKGSSELLWGGVPQYSSSLWGPPSADDSRVIGSPTPLTTLLPGDLLSGESL.

The segment covering 1–31 (MEEKKKKKQEEKKKKEGAQKKAADQKTKVPE) has biased composition (basic and acidic residues). Disordered regions lie at residues 1 to 160 (MEEK…PTYR), 181 to 256 (PSIT…NSNG), 366 to 412 (PQES…AMQT), 439 to 931 (NGSS…IRRK), 961 to 1063 (VIQS…VAFG), and 1115 to 1139 (ESTS…KTSG). Residues 34–44 (KTCSSQPQPAG) are compositionally biased toward polar residues. Positions 45–57 (TSTSTSTSTISSS) are enriched in low complexity. Polar residues predominate over residues 58–71 (NNGKRASASGQQPA). Positions 76–88 (LPREVPPRFRQQE) are enriched in basic and acidic residues. Composition is skewed to polar residues over residues 100 to 111 (PTGTLTSVSPTQ) and 183 to 217 (ITGT…GSAQ). Residues 211 to 1133 (MATGSAQGNF…GNAPKKGLQK (923 aa)) form a sufficient for interaction with argonaute family proteins region. Positions 218–235 (GNFTGHTKKTNGNNGTNG) are enriched in low complexity. A compositionally biased stretch (polar residues) spans 366 to 393 (PQESTEPQTSTSQNVSFSAQPQNLNTDG). 3 stretches are compositionally biased toward low complexity: residues 394-408 (PNNT…NPIN), 439-453 (NGSS…SAEG), and 469-480 (GNSNSGFSQGNG). Residues 481 to 498 (DTVNSALSAKQNGSSSAV) are compositionally biased toward polar residues. R523 carries the omega-N-methylarginine modification. Positions 572 to 585 (GWESPSVTSQNPTV) are enriched in polar residues. The span at 594–614 (SWAKAASSGTTASEGSSDGSG) shows a compositional bias: low complexity. Residues 625–636 (GTGEGRRRDKGI) are compositionally biased toward basic and acidic residues. The segment covering 654–669 (LSNTGWGQTPVKQNTA) has biased composition (polar residues). Over residues 674 to 684 (ESPRSERKNDN) the composition is skewed to basic and acidic residues. S675 is modified (phosphoserine). Positions 694-718 (TQASNSGGKNDGSIMNSTNTSSVSG) are enriched in polar residues. Composition is skewed to low complexity over residues 720–730 (VNAPPAAVPAN) and 750–772 (SISS…SGAA). 2 stretches are compositionally biased toward polar residues: residues 834–866 (NRSG…TNWG) and 873–888 (PQQN…NVSN). Residue S924 is modified to Phosphoserine. The span at 964–982 (SSTTTNTTTTTTTTTSNTT) shows a compositional bias: low complexity. At T987 the chain carries Phosphothreonine. Positions 1021 to 1035 (ENSWGEPSSPSTLVD) are enriched in polar residues. The region spanning 1140-1185 (KQDEAWIMSRLIKQLTDMGFPREPAEEALKSNNMNLDQAMSALLEK) is the UBA domain. S1218 is modified (phosphoserine). 4 disordered regions span residues 1291–1312 (AAQA…NSSQ), 1419–1658 (VKQP…PSSS), 1689–1732 (STWS…PSST), and 1848–1869 (TSSW…GSSH). The stretch at 1388-1419 (MRQQEQQVARTITNLQQQIQQHQRQLAQALLV) forms a coiled coil. The segment covering 1421-1430 (QPPPPPPPPH) has biased composition (pro residues). A silencing domain; interaction with CNOT1 and PAN3 region spans residues 1467–1936 (NTFAPYPLAG…PGDLLSGESL (470 aa)). The segment covering 1496–1515 (DPSQSQSRLPQWTHPNSMDN) has biased composition (polar residues). The tract at residues 1578-1624 (KSDSDKISNGSSINWPPEFHPGVPWKGLQNIDPENDPDVTPGSVPTG) is required for interaction with PABPC1. Residues 1578 to 1936 (KSDSDKISNG…PGDLLSGESL (359 aa)) are sufficient for translational repression when tethered to a target mRNA. The segment at 1588–1606 (SSINWPPEFHPGVPWKGLQ) is PABPC1-interacting motif-2 (PAM2). Residues 1623 to 1633 (TGPTINTTIQD) show a composition bias toward polar residues. Residues 1641–1658 (SGGSSPPSSQNATLPSSS) are compositionally biased toward low complexity. The segment covering 1689-1703 (STWSSGPTSHTQASL) has biased composition (polar residues). An RRM domain is found at 1811 to 1878 (AQKSLHMCVL…HGLVRSDAGH (68 aa)). Residues 1842–1936 (GQALPPTSSW…PGDLLSGESL (95 aa)) are interaction with the CCR4-NOT complex. Residues 1848–1865 (TSSWQSSSASSQPRLSAA) show a composition bias toward low complexity.

Belongs to the GW182 family. Interacts with one or more of the argonaute family proteins AGO1, AGO2, AGO3 and AGO4. Interacts with PABPC1 and EIF4G1. Interacts with CNOT1; the interaction is direct and mediates the association with the CCR4-NOT complex. Interacts with PAN3; the interaction mediates the association with the PAN complex.

Its function is as follows. Plays a role in RNA-mediated gene silencing by micro-RNAs (miRNAs). Required for miRNA-dependent translational repression of complementary mRNAs by argonaute family proteins. As scaffoldng protein associates with argonaute proteins bound to partially complementary mRNAs and simultaneously can recruit CCR4-NOT and PAN deadenylase complexes. The protein is Trinucleotide repeat-containing gene 6C protein (TNRC6C) of Homo sapiens (Human).